A 1036-amino-acid polypeptide reads, in one-letter code: MAPRLQLEKAAWRWAETVRPEEVSQEHIETAYRIWLEPCIRGVCRRNCRGNPNCLVGIGEHIWLGEIDENSFHNIDDPNCERRKKNSFVGLTNLGASCYVNTFLQVWFLNLELRQALYLCPSTCSDYTKGDGIRGGKDYEPQTICEHLQYLFALLQNSNRRYIDPSGFVKALGLDTGQQQDAQESSKLFMSLLEDTLSKQKNPDVRNVVQQQFCGEYAYVTVCSQCGRESKLVSKFYELELNIQGHKQLTDCISEFLKEERLEGDNRYFCENCQSKQNATRKIRLLSLPCTLNLQLMRFVFDRQTGHKKKLNAYIGFSESLDMEPYVEHKGGSFVYELSAVLIHRGVSAYSGHYIAHVKDPQSGDWYKFNDEDIEKMEGKKLQLGIEEDLTEPSKSQTRKPKCGKGTHCSRNAYMLVYRLQTQEKNHTMVQVPAFLQELVDRDNSKFEEWCVEMAEMRRQSVDKGRAKHEEVKELYQRLPAGAEPYEFVSLEWLQKWLDESTPTKPIDNNACLCSHDKLHPDKISIMKRISEYAADIFYSRYGGGPRLTVKALCKDCVVERCRILRLKNQLNEDYKTVNNLLKATMKGSDGFWVGKSSLRSWRQLALEQLDEQDGEAEQSNGKINGSPFSKDESKEEKKEEEEELNFNEDILCPHGELSISENERRLVSQEAWSKLQQYFPKAPEFPSYKECCSQCKILEREGEENEALHKMIAKEQKTSLPNLFQDKNRPCLSNWPEDTDALYIVSHFFLDEWRKFVRKPARSTPVSSVGNAALLCPHGGLMFTFPSLTKEDSKLIALIWPSEWQMIQKLFVVDKVIKITRIEVGDVNPSQTQYISEPNLCPDCREGLLCQQQKDLREYTQATIYVHKVVDNKKVMKDSAPELNVSSSETEEDKEEAKPDGEKDPDFNQSNGGTKRQKTSQQGYVAYQKQVIRRSTRHRKVRGEKALLVSANQTLKELKIQIMHAFSVAPFDQNLSIDGKILNDDCATLGTLGVIPESVILLKADEPIADYAAMDDVMQVCMPEEGFKGTGLLGH.

In terms of domain architecture, USP spans 89–421 (VGLTNLGASC…NAYMLVYRLQ (333 aa)). Cys-98 acts as the Nucleophile in catalysis. His-353 serves as the catalytic Proton acceptor. 3 DUSP domains span residues 460 to 554 (QSVD…KALC), 569 to 692 (NQLN…YKEC), and 712 to 825 (MIAK…RIEV). Residues 611–644 (DEQDGEAEQSNGKINGSPFSKDESKEEKKEEEEE) are disordered. Residues 618–628 (EQSNGKINGSP) show a composition bias toward polar residues. The segment at 881–924 (APELNVSSSETEEDKEEAKPDGEKDPDFNQSNGGTKRQKTSQQG) is disordered. 3 positions are modified to phosphoserine: Ser-887, Ser-888, and Ser-889. Residues 896 to 907 (EEAKPDGEKDPD) show a composition bias toward basic and acidic residues. Residues 908–924 (FNQSNGGTKRQKTSQQG) are compositionally biased toward polar residues. A Ubiquitin-like domain is found at 930–1010 (KQVIRRSTRH…ILLKADEPIA (81 aa)). Lys-957 bears the N6-acetyllysine mark.

It belongs to the peptidase C19 family. Interacts with TRAF2 and RELA. Interacts with GPS1. In terms of tissue distribution, present in the brain, in particular in the postsynaptic density and the dendritic lipid raft fractions (at protein level).

It localises to the cytoplasm. Its subcellular location is the nucleus. The protein resides in the cell projection. It is found in the cilium. It carries out the reaction Thiol-dependent hydrolysis of ester, thioester, amide, peptide and isopeptide bonds formed by the C-terminal Gly of ubiquitin (a 76-residue protein attached to proteins as an intracellular targeting signal).. Its function is as follows. Deubiquitinase that recognizes and hydrolyzes the peptide bond at the C-terminal Gly of ubiquitin. Involved in the processing of polyubiquitin precursors as well as that of ubiquitinated proteins. Plays a role in the regulation of NF-kappa-B activation by TNF receptor superfamily via its interactions with RELA and TRAF2. May also play a regulatory role at postsynaptic sites. Plays an important role in cell cycle progression by deubiquitinating Aurora B/AURKB and thereby extending its stability. In the context of H. pylori infection, stabilizes nuclear RELA through deubiquitination, thereby promoting the transcriptional activity of RELA to prolong TNFAIP3 de novo synthesis. Consequently, TNFAIP3 suppresses caspase activity and apoptotic cell death. Also functions in the modulation of the ciliary and synaptic transport as well as cytoskeleton organization, which are key for photoreceptor function and homeostasis. To achieve this, stabilizes the levels of the retinal degeneration-associated proteins ARL3 and UNC119 using distinct mechanisms. Plays a positive role in pyroptosis by stabilizing gasdermin E/GSDME through removal of its 'Lys-48'-linked ubiquitination. This chain is Ubiquitin carboxyl-terminal hydrolase 48 (Usp48), found in Rattus norvegicus (Rat).